The following is a 270-amino-acid chain: Putative carbamate hydrolase RutD (270 aa).

Belongs to the AB hydrolase superfamily. Hydrolase RutD family.

The catalysed reaction is carbamate + 2 H(+) = NH4(+) + CO2. Functionally, involved in pyrimidine catabolism. May facilitate the hydrolysis of carbamate, a reaction that can also occur spontaneously. This Escherichia coli O44:H18 (strain 042 / EAEC) protein is Putative carbamate hydrolase RutD.